The chain runs to 531 residues: Flavin-containing monooxygenase 3 (531 aa).

Residues 9–13 (GAGVS), glutamate 32, 40–41 (LW), and 61–62 (NS) each bind FAD. Residues 60–61 (TN) and 195–198 (SGCD) each bind NADP(+). Serine 401 is subject to Phosphoserine. The chain crosses the membrane as a helical span at residues 511–531 (YSHFLRLLAVPVLIALFLVLI).

The protein belongs to the FMO family. Requires FAD as cofactor. Detected in liver and kidney (at protein level). Expressed in kidney and liver. Weakly expressed in lung. Does not seem to be expressed in brain, adipose tissue, or muscle.

The protein resides in the microsome membrane. It localises to the endoplasmic reticulum membrane. The catalysed reaction is trimethylamine + NADPH + O2 = trimethylamine N-oxide + NADP(+) + H2O. It carries out the reaction N,N-dimethylaniline + NADPH + O2 + H(+) = N,N-dimethylaniline N-oxide + NADP(+) + H2O. The enzyme catalyses hypotaurine + NADPH + O2 + H(+) = taurine + NADP(+) + H2O. It catalyses the reaction (S)-nicotine + NADPH + O2 = trans-(S)-nicotine N(1')-oxide + NADP(+) + H2O. The catalysed reaction is albendazole + NADPH + O2 + H(+) = albendazole S-oxide + NADP(+) + H2O. Essential hepatic enzyme that catalyzes the oxygenation of a wide variety of nitrogen- and sulfur-containing compounds including drugs as well as dietary compounds. Plays an important role in the metabolism of trimethylamine (TMA), via the production of trimethylamine N-oxide (TMAO) metabolite. TMA is generated by the action of gut microbiota using dietary precursors such as choline, choline containing compounds, betaine or L-carnitine. By regulating TMAO concentration, FMO3 directly impacts both platelet responsiveness and rate of thrombus formation. This chain is Flavin-containing monooxygenase 3 (Fmo3), found in Rattus norvegicus (Rat).